Consider the following 393-residue polypeptide: Putative amino-acid ABC transporter permease protein YhdX (393 aa).

The next 8 membrane-spanning stretches (helical) occupy residues 21-41 (AWLFQILAVVAVVGIVGWLFH), 92-112 (LLVSALCIVFASVLGFFIGLA), 128-148 (IEIFRNIPPLLQIFFWYFAVL), 180-200 (DGFIAFILAVVMAIVLSVGLF), 219-239 (IAAVLIIGLPLLAQWLFGAAL), 256-276 (VLIPELAALTLALSVYTSAFI), 333-353 (SSLAAAIGYPDMVSLFAGTVL), and 363-383 (IAMTMSVYLIISLTISLLMNI). An ABC transmembrane type-1 domain is found at 88–381 (LLNTLLVSAL…IISLTISLLM (294 aa)).

It belongs to the binding-protein-dependent transport system permease family. HisMQ subfamily.

The protein resides in the cell inner membrane. Functionally, probably part of the binding-protein-dependent transport system YdhWXYZ for an amino acid; probably responsible for the translocation of the substrate across the membrane. This is Putative amino-acid ABC transporter permease protein YhdX (yhdX) from Escherichia coli (strain K12).